The sequence spans 436 residues: 3-ketoacyl-CoA thiolase (436 aa).

The Acyl-thioester intermediate role is filled by cysteine 99. Catalysis depends on proton acceptor residues histidine 392 and cysteine 422.

It belongs to the thiolase-like superfamily. Thiolase family. As to quaternary structure, heterotetramer of two alpha chains (FadJ) and two beta chains (FadI).

It is found in the cytoplasm. The enzyme catalyses an acyl-CoA + acetyl-CoA = a 3-oxoacyl-CoA + CoA. It participates in lipid metabolism; fatty acid beta-oxidation. Functionally, catalyzes the final step of fatty acid oxidation in which acetyl-CoA is released and the CoA ester of a fatty acid two carbons shorter is formed. This chain is 3-ketoacyl-CoA thiolase, found in Shewanella woodyi (strain ATCC 51908 / MS32).